Here is a 411-residue protein sequence, read N- to C-terminus: LL-diaminopimelate aminotransferase (411 aa).

Residues Y15 and G42 each coordinate substrate. Pyridoxal 5'-phosphate contacts are provided by residues Y72, 108-109 (SK), Y132, N187, Y218, and 246-248 (SFS). Substrate-binding residues include K109, Y132, and N187. K249 bears the N6-(pyridoxal phosphate)lysine mark. The pyridoxal 5'-phosphate site is built by R257 and N292. Substrate is bound by residues N292 and R388.

The protein belongs to the class-I pyridoxal-phosphate-dependent aminotransferase family. LL-diaminopimelate aminotransferase subfamily. As to quaternary structure, homodimer. Pyridoxal 5'-phosphate is required as a cofactor.

It catalyses the reaction (2S,6S)-2,6-diaminopimelate + 2-oxoglutarate = (S)-2,3,4,5-tetrahydrodipicolinate + L-glutamate + H2O + H(+). It functions in the pathway amino-acid biosynthesis; L-lysine biosynthesis via DAP pathway; LL-2,6-diaminopimelate from (S)-tetrahydrodipicolinate (aminotransferase route): step 1/1. Functionally, involved in the synthesis of meso-diaminopimelate (m-DAP or DL-DAP), required for both lysine and peptidoglycan biosynthesis. Catalyzes the direct conversion of tetrahydrodipicolinate to LL-diaminopimelate. This Synechococcus sp. (strain JA-3-3Ab) (Cyanobacteria bacterium Yellowstone A-Prime) protein is LL-diaminopimelate aminotransferase.